Reading from the N-terminus, the 565-residue chain is Proline--tRNA ligase (565 aa).

It belongs to the class-II aminoacyl-tRNA synthetase family. ProS type 1 subfamily. Homodimer.

Its subcellular location is the cytoplasm. The catalysed reaction is tRNA(Pro) + L-proline + ATP = L-prolyl-tRNA(Pro) + AMP + diphosphate. In terms of biological role, catalyzes the attachment of proline to tRNA(Pro) in a two-step reaction: proline is first activated by ATP to form Pro-AMP and then transferred to the acceptor end of tRNA(Pro). As ProRS can inadvertently accommodate and process non-cognate amino acids such as alanine and cysteine, to avoid such errors it has two additional distinct editing activities against alanine. One activity is designated as 'pretransfer' editing and involves the tRNA(Pro)-independent hydrolysis of activated Ala-AMP. The other activity is designated 'posttransfer' editing and involves deacylation of mischarged Ala-tRNA(Pro). The misacylated Cys-tRNA(Pro) is not edited by ProRS. The sequence is that of Proline--tRNA ligase from Hydrogenobaculum sp. (strain Y04AAS1).